Here is a 112-residue protein sequence, read N- to C-terminus: Nitrogen regulatory protein P-II (112 aa).

Y51 carries the post-translational modification O-UMP-tyrosine.

It belongs to the P(II) protein family. In terms of assembly, homotrimer.

P-II indirectly controls the transcription of the glutamine synthetase gene (glnA). P-II prevents NR-II-catalyzed conversion of NR-I to NR-I-phosphate, the transcriptional activator of glnA. When P-II is uridylylated to P-II-UMP, these events are reversed. When the ratio of Gln to 2-ketoglutarate decreases, P-II is uridylylated to P-II-UMP, which causes the deadenylation of glutamine synthetase, so activating the enzyme. This is Nitrogen regulatory protein P-II (glnB) from Rhodospirillum rubrum (strain ATCC 11170 / ATH 1.1.1 / DSM 467 / LMG 4362 / NCIMB 8255 / S1).